Consider the following 106-residue polypeptide: COX assembly mitochondrial protein homolog (106 aa).

At A2 the chain carries N-acetylalanine. One can recognise a CHCH domain in the interval 28-71; sequence RERCSEQVQDFTKCCKDSGVLMVVKCRKENSALKDCLTSYYKDP. Short sequence motifs (cx9C motif) lie at residues 31-41 and 53-63; these read CSEQVQDFTKC and CRKENSALKDC. Disulfide bonds link C31-C63 and C41-C53.

This sequence belongs to the CMC family. As to quaternary structure, component of the MITRAC (mitochondrial translation regulation assembly intermediate of cytochrome c oxidase complex) complex, the core components of this complex being COA3/MITRAC12 and COX14.

It localises to the mitochondrion. In terms of biological role, component of the MITRAC (mitochondrial translation regulation assembly intermediate of cytochrome c oxidase complex) complex, that regulates cytochrome c oxidase assembly. This Bos taurus (Bovine) protein is COX assembly mitochondrial protein homolog (CMC1).